The following is a 234-amino-acid chain: Sugar fermentation stimulation protein homolog (234 aa).

The protein belongs to the SfsA family.

This is Sugar fermentation stimulation protein homolog from Pseudoalteromonas atlantica (strain T6c / ATCC BAA-1087).